The primary structure comprises 221 residues: ATP phosphoribosyltransferase (221 aa).

Belongs to the ATP phosphoribosyltransferase family. Short subfamily. In terms of assembly, heteromultimer composed of HisG and HisZ subunits.

It localises to the cytoplasm. It catalyses the reaction 1-(5-phospho-beta-D-ribosyl)-ATP + diphosphate = 5-phospho-alpha-D-ribose 1-diphosphate + ATP. It functions in the pathway amino-acid biosynthesis; L-histidine biosynthesis; L-histidine from 5-phospho-alpha-D-ribose 1-diphosphate: step 1/9. In terms of biological role, catalyzes the condensation of ATP and 5-phosphoribose 1-diphosphate to form N'-(5'-phosphoribosyl)-ATP (PR-ATP). Has a crucial role in the pathway because the rate of histidine biosynthesis seems to be controlled primarily by regulation of HisG enzymatic activity. This chain is ATP phosphoribosyltransferase, found in Anaeromyxobacter dehalogenans (strain 2CP-1 / ATCC BAA-258).